The following is a 346-amino-acid chain: Dihydroorotate dehydrogenase (quinone) (346 aa).

FMN is bound by residues 62-66 (AGMDK) and T86. Residue K66 participates in substrate binding. Position 111-115 (111-115 (NRMGF)) interacts with substrate. Residues N142 and N175 each contribute to the FMN site. N175 is a substrate binding site. Residue S178 is the Nucleophile of the active site. Residue N180 coordinates substrate. FMN-binding residues include K211 and V239. A substrate-binding site is contributed by 240-241 (NT). FMN contacts are provided by residues G261, G289, and 310-311 (YT).

Belongs to the dihydroorotate dehydrogenase family. Type 2 subfamily. As to quaternary structure, monomer. The cofactor is FMN.

It localises to the cell membrane. The enzyme catalyses (S)-dihydroorotate + a quinone = orotate + a quinol. The protein operates within pyrimidine metabolism; UMP biosynthesis via de novo pathway; orotate from (S)-dihydroorotate (quinone route): step 1/1. Catalyzes the conversion of dihydroorotate to orotate with quinone as electron acceptor. This is Dihydroorotate dehydrogenase (quinone) from Thermus thermophilus (strain ATCC 27634 / DSM 579 / HB8).